The following is a 315-amino-acid chain: Probable cytochrome c oxidase subunit 2 (315 aa).

The RPE1 insert domain maps to 6–53 (RHLSKPAYREEFKGDTSPRTAAYISNRADASLGSTYKLPLEAKFWKMS). Helical transmembrane passes span 41–61 (YKLP…CFLI), 96–116 (LLYI…FVCI), and 133–153 (VLIE…IAVP). Cu cation-binding residues include His235, Cys270, Cys274, and His278.

The protein belongs to the cytochrome c oxidase subunit 2 family. Cu cation is required as a cofactor. It depends on heme as a cofactor.

The protein resides in the cell membrane. The catalysed reaction is 4 Fe(II)-[cytochrome c] + O2 + 8 H(+)(in) = 4 Fe(III)-[cytochrome c] + 2 H2O + 4 H(+)(out). Subunits I and II form the functional core of the enzyme complex. Electrons originating in cytochrome c are transferred via heme a and Cu(A) to the binuclear center formed by heme a3 and Cu(B). The protein is Probable cytochrome c oxidase subunit 2 (ctaC) of Rickettsia felis (strain ATCC VR-1525 / URRWXCal2) (Rickettsia azadi).